A 78-amino-acid chain; its full sequence is Putative snRNP Sm-like protein (78 aa).

Residues 4-76 enclose the Sm domain; it reads RPLDVIHRSL…VLAISPVDVG (73 aa).

This sequence belongs to the snRNP Sm proteins family.

The protein is Putative snRNP Sm-like protein of Thermococcus onnurineus (strain NA1).